We begin with the raw amino-acid sequence, 704 residues long: UvrABC system protein C (704 aa).

The tract at residues 1–77 (MIHDPAEPPA…PAQAGAGPMA (77 aa)) is disordered. Over residues 49-66 (VEEDDEARLPEVEDEPEA) the composition is skewed to acidic residues. Over residues 67 to 77 (EPAQAGAGPMA) the composition is skewed to low complexity. Positions 92-170 (TSPGVYRMLN…IKQLRPRFNV (79 aa)) constitute a GIY-YIG domain. Positions 280 to 315 (RAVKELLAAEMEKASGELEFETAALYRDRLAALSAI) constitute a UVR domain.

It belongs to the UvrC family. As to quaternary structure, interacts with UvrB in an incision complex.

The protein resides in the cytoplasm. Its function is as follows. The UvrABC repair system catalyzes the recognition and processing of DNA lesions. UvrC both incises the 5' and 3' sides of the lesion. The N-terminal half is responsible for the 3' incision and the C-terminal half is responsible for the 5' incision. The protein is UvrABC system protein C of Rhodopseudomonas palustris (strain ATCC BAA-98 / CGA009).